The chain runs to 380 residues: tRNA-specific 2-thiouridylase MnmA (380 aa).

ATP-binding positions include 14 to 21 and Met-40; that span reads GLSGGVDS. The interval 100 to 102 is interaction with target base in tRNA; it reads NPD. Cys-105 (nucleophile) is an active-site residue. An intrachain disulfide couples Cys-105 to Cys-203. Gly-129 is a binding site for ATP. Positions 153–155 are interaction with tRNA; sequence KDQ. Cys-203 functions as the Cysteine persulfide intermediate in the catalytic mechanism. The interval 322–323 is interaction with tRNA; it reads RY.

This sequence belongs to the MnmA/TRMU family.

The protein resides in the cytoplasm. The catalysed reaction is S-sulfanyl-L-cysteinyl-[protein] + uridine(34) in tRNA + AH2 + ATP = 2-thiouridine(34) in tRNA + L-cysteinyl-[protein] + A + AMP + diphosphate + H(+). In terms of biological role, catalyzes the 2-thiolation of uridine at the wobble position (U34) of tRNA, leading to the formation of s(2)U34. This Leptothrix cholodnii (strain ATCC 51168 / LMG 8142 / SP-6) (Leptothrix discophora (strain SP-6)) protein is tRNA-specific 2-thiouridylase MnmA.